The primary structure comprises 283 residues: MLWDYLILAKPEISSVVTLSAFAGFLIGSPTGLDGGTLLWTMLGTALCAGGVGTLNHVLERRYDAQMKRTAQRPLPAGRADPKMARRVGILLVCLAVGLLCPLVNVLTAVLAALTAVLYLFVYTPLKRTTKWNTLVGTVPGALPALGGYTAATGHLGAGGWATFGILATWQMPHFLSLAWMYRKDYARGDYAMLPVVEPDGNSTAAQMIGFAALLVPVSVLPVLTEAAGWIYGVGVVPLGLWFLWTTIVFHGERTGQKAKRVLKASVLYIPGLVALLLVDWFL.

7 helical membrane-spanning segments follow: residues 13–33 (ISSV…PTGL), 35–55 (GGTL…VGTL), 90–110 (ILLV…LTAV), 156–176 (LGAG…PHFL), 208–228 (MIGF…TEAA), 230–250 (WIYG…TIVF), and 262–282 (VLKA…VDWF).

The protein belongs to the UbiA prenyltransferase family. Protoheme IX farnesyltransferase subfamily.

It is found in the cell inner membrane. It carries out the reaction heme b + (2E,6E)-farnesyl diphosphate + H2O = Fe(II)-heme o + diphosphate. The protein operates within porphyrin-containing compound metabolism; heme O biosynthesis; heme O from protoheme: step 1/1. Its function is as follows. Converts heme B (protoheme IX) to heme O by substitution of the vinyl group on carbon 2 of heme B porphyrin ring with a hydroxyethyl farnesyl side group. The protein is Protoheme IX farnesyltransferase of Salinibacter ruber (strain DSM 13855 / M31).